The primary structure comprises 301 residues: ATP synthase gamma chain (301 aa).

This sequence belongs to the ATPase gamma chain family. F-type ATPases have 2 components, CF(1) - the catalytic core - and CF(0) - the membrane proton channel. CF(1) has five subunits: alpha(3), beta(3), gamma(1), delta(1), epsilon(1). CF(0) has three main subunits: a, b and c.

Its subcellular location is the cell inner membrane. Functionally, produces ATP from ADP in the presence of a proton gradient across the membrane. The gamma chain is believed to be important in regulating ATPase activity and the flow of protons through the CF(0) complex. The polypeptide is ATP synthase gamma chain (Helicobacter pylori (strain P12)).